The chain runs to 399 residues: Elongation factor Tu (399 aa).

The region spanning 10–204 is the tr-type G domain; it reads KPHVNIGTIG…AVDANIPEPE (195 aa). The interval 19 to 26 is G1; that stretch reads GHVDHGKT. 19–26 is a binding site for GTP; sequence GHVDHGKT. Thr26 is a binding site for Mg(2+). The segment at 60–64 is G2; it reads GITIN. Positions 81-84 are G3; the sequence is DCPG. GTP is bound by residues 81-85 and 136-139; these read DCPGH and NKCD. Residues 136 to 139 form a G4 region; sequence NKCD. The G5 stretch occupies residues 174-176; sequence SGL.

This sequence belongs to the TRAFAC class translation factor GTPase superfamily. Classic translation factor GTPase family. EF-Tu/EF-1A subfamily. As to quaternary structure, monomer.

It is found in the cytoplasm. The enzyme catalyses GTP + H2O = GDP + phosphate + H(+). GTP hydrolase that promotes the GTP-dependent binding of aminoacyl-tRNA to the A-site of ribosomes during protein biosynthesis. The polypeptide is Elongation factor Tu (Synechococcus sp. (strain WH7803)).